The sequence spans 417 residues: V-set and immunoglobulin domain-containing protein 8 (417 aa).

The N-terminal stretch at 1 to 21 (MGVRGALHLLLVCLSPALLSA) is a signal peptide. 2 Ig-like V-type domains span residues 22–140 (VRIN…VIVT) and 145–256 (PAVP…VKVS). The Extracellular portion of the chain corresponds to 22–262 (VRINGDGQEV…VKVSDSQRVG (241 aa)). 2 cysteine pairs are disulfide-bonded: C44–C125 and C166–C238. Residues 263-283 (MIVGAVLGSLLMLACLALGIW) traverse the membrane as a helical segment. The Cytoplasmic portion of the chain corresponds to 284 to 417 (GLICCCCGGG…QRSCKDGLLV (134 aa)).

It localises to the membrane. The chain is V-set and immunoglobulin domain-containing protein 8 (Vsig8) from Mus musculus (Mouse).